Consider the following 451-residue polypeptide: MVFGENQDLIRTHFQKEADKVRAMKTNWGLFTRTRMIAQSDYDFIVTYQQAENEAERSTVLSVFKEKAVYAFVHLMSQISKDDYVRYTLTLIDDMLREDVTRTIIFEDVAVLLKRSPFSFFMGLLHRQDQYIVHITFSILTKMAVFGNIKLSGDELDYCMGSLKEAMNRGTNNDYIVTAVRCMQTLFRFDPYRVSFVNINGYDSLTHALYSTRKCGFQIQYQIIFCMWLLTFNGHAAEVALSGNLIQTISGILGNCQKEKVIRIVVSTLRNLITSNQDVYMKKQAALQMIQNRIPTKLDHLENRKFTDVDLVEDMVYLQTELKKVVQVLTSFDEYENELRQGSLHWSPAHKCEVFWNENAHRLNDNRQELLKLLVAMLEKSNDPLVLCVAAHDIGEFVRYYPRGKLKVEQLGGKEAMMRLLTVKDPNVRYHALLAAQKLMINNWKDLGLEI.

This sequence belongs to the V-ATPase H subunit family. In terms of assembly, V-ATPase is a heteromultimeric enzyme made up of two complexes: the ATP-hydrolytic V1 complex and the proton translocation V0 complex. The V1 complex consists of three catalytic AB heterodimers that form a heterohexamer, three peripheral stalks each consisting of EG heterodimers, one central rotor including subunits D and F, and the regulatory subunits C and H. The proton translocation complex V0 consists of the proton transport subunit a, a ring of proteolipid subunits c9c'', rotary subunit d, subunits e and f, and the accessory subunits vah-19/Ac45 and vah-20/PRR.

In terms of biological role, subunit of the V1 complex of vacuolar(H+)-ATPase (V-ATPase), a multisubunit enzyme composed of a peripheral complex (V1) that hydrolyzes ATP and a membrane integral complex (V0) that translocates protons. V-ATPase is responsible for acidifying and maintaining the pH of intracellular compartments and in some cell types, is targeted to the plasma membrane, where it is responsible for acidifying the extracellular environment. Subunit H is essential for V-ATPase activity, but not for the assembly of the complex. This is Probable V-type proton ATPase subunit H 1 from Caenorhabditis elegans.